The primary structure comprises 433 residues: Serine hydroxymethyltransferase (433 aa).

Residue 121-123 (AHV) participates in (6S)-5,6,7,8-tetrahydrofolate binding. Lysine 227 is subject to N6-(pyridoxal phosphate)lysine. Glutamate 243 contributes to the (6S)-5,6,7,8-tetrahydrofolate binding site.

This sequence belongs to the SHMT family. As to quaternary structure, homodimer. The cofactor is pyridoxal 5'-phosphate.

The protein resides in the cytoplasm. It functions in the pathway amino-acid biosynthesis; glycine biosynthesis; glycine from L-serine: step 1/1. Catalyzes the reversible interconversion of serine and glycine with a modified folate serving as the one-carbon carrier. Also exhibits a pteridine-independent aldolase activity toward beta-hydroxyamino acids, producing glycine and aldehydes, via a retro-aldol mechanism. This Saccharolobus islandicus (strain L.S.2.15 / Lassen #1) (Sulfolobus islandicus) protein is Serine hydroxymethyltransferase.